We begin with the raw amino-acid sequence, 920 residues long: Isoleucine--tRNA ligase (920 aa).

The short motif at proline 58 to histidine 68 is the 'HIGH' region element. An L-isoleucyl-5'-AMP-binding site is contributed by glutamate 569. A 'KMSKS' region motif is present at residues lysine 610 to serine 614. ATP is bound at residue lysine 613. Cysteine 895, cysteine 898, cysteine 910, and cysteine 913 together coordinate Zn(2+).

This sequence belongs to the class-I aminoacyl-tRNA synthetase family. IleS type 1 subfamily. In terms of assembly, monomer. Zn(2+) serves as cofactor.

It is found in the cytoplasm. It catalyses the reaction tRNA(Ile) + L-isoleucine + ATP = L-isoleucyl-tRNA(Ile) + AMP + diphosphate. Functionally, catalyzes the attachment of isoleucine to tRNA(Ile). As IleRS can inadvertently accommodate and process structurally similar amino acids such as valine, to avoid such errors it has two additional distinct tRNA(Ile)-dependent editing activities. One activity is designated as 'pretransfer' editing and involves the hydrolysis of activated Val-AMP. The other activity is designated 'posttransfer' editing and involves deacylation of mischarged Val-tRNA(Ile). The protein is Isoleucine--tRNA ligase of Helicobacter pylori (strain HPAG1).